The chain runs to 119 residues: uncharacterized protein (119 aa).

Residues 1–112 (MVFNMRSTRG…FISSCLLLVL (112 aa)) form the ABC transmembrane type-1 domain. The next 2 membrane-spanning stretches (helical) occupy residues 51–73 (VLAW…ATRF) and 91–111 (FEIA…LLLV).

Belongs to the binding-protein-dependent transport system permease family. CysTW subfamily.

The protein resides in the cell membrane. This is an uncharacterized protein from Haemophilus influenzae (strain ATCC 51907 / DSM 11121 / KW20 / Rd).